A 112-amino-acid chain; its full sequence is Outer membrane protein assembly factor BamE (112 aa).

A signal peptide spans 1-19 (MRCKTLTAAAAVLLMLTAG). Cys-20 is lipidated: N-palmitoyl cysteine. Residue Cys-20 is the site of S-diacylglycerol cysteine attachment.

Belongs to the BamE family. As to quaternary structure, part of the Bam complex, which is composed of the outer membrane protein BamA, and four lipoproteins BamB, BamC, BamD and BamE.

It localises to the cell outer membrane. Part of the outer membrane protein assembly complex, which is involved in assembly and insertion of beta-barrel proteins into the outer membrane. This is Outer membrane protein assembly factor BamE from Salmonella typhimurium (strain LT2 / SGSC1412 / ATCC 700720).